A 141-amino-acid chain; its full sequence is Nucleoside diphosphate kinase (141 aa).

Lys-10, Phe-58, Arg-86, Thr-92, Arg-103, and Asn-113 together coordinate ATP. Residue His-116 is the Pros-phosphohistidine intermediate of the active site.

Belongs to the NDK family. In terms of assembly, homotetramer. The cofactor is Mg(2+).

It is found in the cytoplasm. The catalysed reaction is a 2'-deoxyribonucleoside 5'-diphosphate + ATP = a 2'-deoxyribonucleoside 5'-triphosphate + ADP. The enzyme catalyses a ribonucleoside 5'-diphosphate + ATP = a ribonucleoside 5'-triphosphate + ADP. Functionally, major role in the synthesis of nucleoside triphosphates other than ATP. The ATP gamma phosphate is transferred to the NDP beta phosphate via a ping-pong mechanism, using a phosphorylated active-site intermediate. In Hydrogenovibrio crunogenus (strain DSM 25203 / XCL-2) (Thiomicrospira crunogena), this protein is Nucleoside diphosphate kinase.